Here is a 218-residue protein sequence, read N- to C-terminus: MAEITAQLVKELREKTGAGMMDCKKALKENEGDLEKSIEWLRQKGIASADKKSGRTAAEGLVHSYIHFGGRIGVLVEVNCETDFVARGDRFKDLVNDVAMQIAACPNVEYVSVADIPQEMVAKEKEIEMGRDDLGKKPANIKEKIVQGRIDKRLKELSLLDQPYIKDQNLTIEELVKQAIAELGENIQVRRFIRFNLGEGIEKAETNFAEEVAAAAKG.

Positions 82 to 85 are involved in Mg(2+) ion dislocation from EF-Tu; sequence TDFV.

Belongs to the EF-Ts family.

The protein localises to the cytoplasm. Functionally, associates with the EF-Tu.GDP complex and induces the exchange of GDP to GTP. It remains bound to the aminoacyl-tRNA.EF-Tu.GTP complex up to the GTP hydrolysis stage on the ribosome. This is Elongation factor Ts (tsf) from Synechocystis sp. (strain ATCC 27184 / PCC 6803 / Kazusa).